Reading from the N-terminus, the 243-residue chain is 2-C-methyl-D-erythritol 4-phosphate cytidylyltransferase (243 aa).

This sequence belongs to the IspD/TarI cytidylyltransferase family. IspD subfamily.

It catalyses the reaction 2-C-methyl-D-erythritol 4-phosphate + CTP + H(+) = 4-CDP-2-C-methyl-D-erythritol + diphosphate. It functions in the pathway isoprenoid biosynthesis; isopentenyl diphosphate biosynthesis via DXP pathway; isopentenyl diphosphate from 1-deoxy-D-xylulose 5-phosphate: step 2/6. Catalyzes the formation of 4-diphosphocytidyl-2-C-methyl-D-erythritol from CTP and 2-C-methyl-D-erythritol 4-phosphate (MEP). The protein is 2-C-methyl-D-erythritol 4-phosphate cytidylyltransferase of Rhodopirellula baltica (strain DSM 10527 / NCIMB 13988 / SH1).